The chain runs to 425 residues: Septin-11 (425 aa).

The residue at position 2 (Ala-2) is an N-acetylalanine. Ser-9 is modified (phosphoserine). The Septin-type G domain occupies 38-304; sequence QGFCFNILCV…ELYRRCKLEE (267 aa). The interval 48 to 55 is G1 motif; the sequence is GETGIGKS. Residues 48 to 55, Gly-103, 184 to 192, Gly-238, and Arg-253 each bind GTP; these read GETGIGKS and KADTIAKNE. A G3 motif region spans residues 100–103; it reads DTVG. The tract at residues 183–186 is G4 motif; sequence AKAD. Positions 320–410 form a coiled coil; that stretch reads QETYEAKRNE…AAQLLQSQAQ (91 aa). Positions 399-425 are disordered; sequence KAAAQLLQSQAQQSGAQQTKKDKDKKN. Low complexity predominate over residues 401 to 416; it reads AAQLLQSQAQQSGAQQ.

This sequence belongs to the TRAFAC class TrmE-Era-EngA-EngB-Septin-like GTPase superfamily. Septin GTPase family. As to quaternary structure, septins polymerize into heterooligomeric protein complexes that form filaments, and can associate with cellular membranes, actin filaments and microtubules. Forms homooligomers. GTPase activity is required for filament formation. Interacts with SEPTIN7, SEPTIN9 and SEPTIN12.

It localises to the cytoplasm. It is found in the cytoskeleton. The protein resides in the synapse. Its subcellular location is the cell projection. The protein localises to the dendritic spine. It localises to the axon. In terms of biological role, filament-forming cytoskeletal GTPase. May play a role in cytokinesis (Potential). May play a role in the cytoarchitecture of neurons, including dendritic arborization and dendritic spines, and in GABAergic synaptic connectivity. This chain is Septin-11, found in Bos taurus (Bovine).